The sequence spans 212 residues: Claudin-7-A (212 aa).

The Cytoplasmic segment spans residues Met1–Gln7. The helical transmembrane segment at Leu8–Pro28 threads the bilayer. The Extracellular portion of the chain corresponds to Gln29 to Arg81. A helical membrane pass occupies residues Ala82 to Met102. The Cytoplasmic portion of the chain corresponds to Lys103–Ala119. The helical transmembrane segment at Met120–Phe140 threads the bilayer. Topologically, residues Ala141–Gly162 are extracellular. A helical transmembrane segment spans residues Ala163–Ala183. Residues Ala184 to Val212 are Cytoplasmic-facing. A disordered region spans residues Gln191–Val212.

Belongs to the claudin family.

It localises to the cell junction. The protein localises to the tight junction. Its subcellular location is the cell membrane. In terms of biological role, plays a major role in tight junction-specific obliteration of the intercellular space. This is Claudin-7-A from Danio rerio (Zebrafish).